A 234-amino-acid polypeptide reads, in one-letter code: Protein SSP120 (234 aa).

Residues Met-1 to Ala-22 form the signal peptide. 2 EF-hand domains span residues Leu-52–Glu-87 and Met-108–Phe-143. At Thr-212 the chain carries Phosphothreonine.

This Saccharomyces cerevisiae (strain ATCC 204508 / S288c) (Baker's yeast) protein is Protein SSP120 (SSP120).